The sequence spans 867 residues: MAQQGQQGQMASGDSNLNFRMVAEIQNVEGQNLQEQVCPEPIFRFFRENKVEIASAITRPFPFLMGLRDRSFISEQMYEHFQEAFRNLVPVTRVMYCVLSELEKTFGWSHLEALFSRINLMAYPDLNEIYRSFQNVCYEHSPLQMNNVNDLEDRPRLLPYGKQENSNACHEMDDIAVPQEALSSSPRCEPGFSSESCEQLALPKAGGGDAEDAPSLLPGGGVSCKLAIQIDEGESEEMPKLLPYDTEVLESNGMIDAARTYSTAPGEKQGEEEGRNSPRKRNQDKEKYQESPEGRDKETFDLKTPQVTNEGEPEKGLCLLPGEGEEGSDDCSEMCDGEEPQEASSSLARCGSVSCLSAETFDLKTPQVTNEGEPEKELSLLPGEGEEGSDDCSEMCDGEERQEASSSLARRGSVSSELENHPMNEEGESEELASSLLYDNVPGAEQSAYENEKCSCVMCFSEEVPGSPEARTESDQACGTMDTVDIANNSTLGKPKRKRRKKRGHGWSRMRMRRQENSQQNDNSKADGQVVSSEKKANVNLKDLSKIRGRKRGKPGTRFTQSDRAAQKRVRSRASRKHKDETVDFKAPLLPVTCGGVKGILHKKKLQQGILVKCIQTEDGKWFTPTEFEIKGGHARSKNWRLSVRCGGWPLRWLMENGFLPDPPRIRYRKKKRILKSQNNSSVDPCMRNLDECEVCRDGGELFCCDTCSRVFHEDCHIPPVEAERTPWNCIFCRMKESPGSQQCCQESEVLERQMCPEEQLKCEFLLLKVYCCSESSFFAKIPYYYYIREACQGLKEPMWLDKIKKRLNEHGYPQVEGFVQDMRLIFQNHRASYKYKDFGQMGFRLEAEFEKNFKEVFAIQETNGNN.

The region spanning 22–138 is the HSR domain; the sequence is VAEIQNVEGQ…IYRSFQNVCY (117 aa). Disordered regions lie at residues 260-341, 365-432, and 486-580; these read TYST…EEPQ, TPQV…SEEL, and IANN…KHKD. A compositionally biased stretch (basic and acidic residues) spans 268-301; the sequence is KQGEEEGRNSPRKRNQDKEKYQESPEGRDKETFD. 2 stretches are compositionally biased toward acidic residues: residues 323-341 and 384-397; these read EGEE…EEPQ and EGEE…EMCD. Over residues 404–416 the composition is skewed to low complexity; the sequence is ASSSLARRGSVSS. 2 stretches are compositionally biased toward basic residues: residues 494–512 and 567–577; these read KPKR…RMRM and QKRVRSRASRK. The Nuclear localization signal motif lies at 495–514; sequence PKRKRRKKRGHGWSRMRMRR. Positions 580–661 constitute an SAND domain; the sequence is DETVDFKAPL…RWLMENGFLP (82 aa). The PHD-type zinc finger occupies 690–736; it reads LDECEVCRDGGELFCCDTCSRVFHEDCHIPPVEAERTPWNCIFCRMK. Threonine 726 carries the post-translational modification Phosphothreonine. A Bromo domain is found at 754–857; the sequence is QMCPEEQLKC…AEFEKNFKEV (104 aa).

Interacts with PIN1. In terms of processing, phosphorylation at Thr-726 promotes binding of PIN1 and subsequent isomerization of Pro-727. As to expression, high levels in spleen and peripheral blood leukocytes, much lower levels in tonsils, thymus, prostate, ovary, small intestine, and colon. Very low levels in heart, brain, placenta, lung, liver, skeletal muscle, kidney, and pancreas. Not detected in brain, liver and muscle.

The protein localises to the nucleus. It localises to the PML body. It is found in the cytoplasm. In terms of biological role, component of the nuclear body, also known as nuclear domain 10, PML oncogenic domain, and KR body. May be involved in the pathogenesis of acute promyelocytic leukemia and viral infection. May play a role in chromatin-mediated regulation of gene expression although it does not bind to histone H3 tails. This Homo sapiens (Human) protein is Nuclear body protein SP140.